The primary structure comprises 381 residues: Arogenate dehydratase/prephenate dehydratase 2, chloroplastic (381 aa).

The disordered stretch occupies residues 1 to 32 (MAMHTVRLSPATQLHGGISSNLSPPNRKPNNS). Residues 1–66 (MAMHTVRLSP…DANGRDNSVR (66 aa)) constitute a chloroplast transit peptide. Residues 18–32 (ISSNLSPPNRKPNNS) show a composition bias toward polar residues. One can recognise a Prephenate dehydratase domain in the interval 100–275 (RVAYQGVRGA…NVTRFLMLAR (176 aa)). One can recognise an ACT domain in the interval 289-375 (SIVFSLEEGP…TFLRVLGSYP (87 aa)).

In terms of tissue distribution, expressed in roots, leaves, stems, flowers and siliques. Most abundant in leaves and seeds.

The protein resides in the plastid. It localises to the chloroplast stroma. It catalyses the reaction L-arogenate + H(+) = L-phenylalanine + CO2 + H2O. The catalysed reaction is prephenate + H(+) = 3-phenylpyruvate + CO2 + H2O. The protein operates within amino-acid biosynthesis; L-phenylalanine biosynthesis; L-phenylalanine from L-arogenate: step 1/1. It functions in the pathway amino-acid biosynthesis; L-phenylalanine biosynthesis; phenylpyruvate from prephenate: step 1/1. Converts the prephenate produced from the shikimate-chorismate pathway into phenylalanine. Dehydratase that uses arogenate and prephenate as substrates. Utilzes more efficiently arogenate than prephenate. Required for chloroplast division prior to ARC5, but in an ARC3- and ARC6-dependent manner, especially involved in the Z-ring formation. This Arabidopsis thaliana (Mouse-ear cress) protein is Arogenate dehydratase/prephenate dehydratase 2, chloroplastic.